We begin with the raw amino-acid sequence, 597 residues long: UvrABC system protein C (597 aa).

The region spanning 15–93 (NSPGVYQYFD…IKKHQPRFNV (79 aa)) is the GIY-YIG domain. The 36-residue stretch at 207–242 (KDSLQRFRNQMKQHSEKMEFEDAQRIKNKIDVLENY) folds into the UVR domain.

It belongs to the UvrC family. Interacts with UvrB in an incision complex.

It is found in the cytoplasm. Functionally, the UvrABC repair system catalyzes the recognition and processing of DNA lesions. UvrC both incises the 5' and 3' sides of the lesion. The N-terminal half is responsible for the 3' incision and the C-terminal half is responsible for the 5' incision. The sequence is that of UvrABC system protein C from Christiangramia forsetii (strain DSM 17595 / CGMCC 1.15422 / KT0803) (Gramella forsetii).